Here is a 101-residue protein sequence, read N- to C-terminus: MTTFTNKELIKEIKERISSLEVRDDIERRAYEIALVSLEVEPDEREAYELFMEKRFGDLVDRRRAKNGDNEYMAWDMTLGWIIWQQRAGIHFSTMSQQEVK.

This is an uncharacterized protein from Escherichia coli (strain K12).